We begin with the raw amino-acid sequence, 82 residues long: Translational regulator CsrA (82 aa).

This sequence belongs to the CsrA/RsmA family. As to quaternary structure, homodimer; the beta-strands of each monomer intercalate to form a hydrophobic core, while the alpha-helices form wings that extend away from the core.

Its subcellular location is the cytoplasm. In terms of biological role, a translational regulator that binds mRNA to regulate translation initiation and/or mRNA stability. Usually binds in the 5'-UTR at or near the Shine-Dalgarno sequence preventing ribosome-binding, thus repressing translation. Its main target seems to be the major flagellin gene, while its function is anatagonized by FliW. The polypeptide is Translational regulator CsrA (Geobacillus kaustophilus (strain HTA426)).